An 83-amino-acid chain; its full sequence is Small ribosomal subunit protein uS17 (83 aa).

This sequence belongs to the universal ribosomal protein uS17 family. In terms of assembly, part of the 30S ribosomal subunit.

One of the primary rRNA binding proteins, it binds specifically to the 5'-end of 16S ribosomal RNA. This Ehrlichia chaffeensis (strain ATCC CRL-10679 / Arkansas) protein is Small ribosomal subunit protein uS17.